A 247-amino-acid chain; its full sequence is Carboxy-S-adenosyl-L-methionine synthase (247 aa).

S-adenosyl-L-methionine contacts are provided by residues Tyr39, 64–66, 89–90, 117–118, Asn132, and Arg199; these read GCS, DN, and DI.

Belongs to the class I-like SAM-binding methyltransferase superfamily. Cx-SAM synthase family. In terms of assembly, homodimer.

It catalyses the reaction prephenate + S-adenosyl-L-methionine = carboxy-S-adenosyl-L-methionine + 3-phenylpyruvate + H2O. Its function is as follows. Catalyzes the conversion of S-adenosyl-L-methionine (SAM) to carboxy-S-adenosyl-L-methionine (Cx-SAM). The polypeptide is Carboxy-S-adenosyl-L-methionine synthase (Escherichia coli O127:H6 (strain E2348/69 / EPEC)).